The following is a 379-amino-acid chain: ATP-sensitive inward rectifier potassium channel 10 (379 aa).

At 1 to 61 (MTSVAKVYYS…LKDLWTTFID (61 aa)) the chain is on the cytoplasmic side. Residue Arg-36 coordinates 1,2-dioctanoyl-sn-glycero-3-phospho-(1D-myo-inositol-4,5-bisphosphate). Residues 62–88 (MQWRYKLLLFSATFAGTWFLFGVVWYL) traverse the membrane as a helical segment. Residues 89–114 (VAVAHGDLLELGPPANHTPCVVQVHT) are Extracellular-facing. Cysteines 108 and 140 form a disulfide. An intramembrane region (discontinuously helical; Pore-forming) is located at residues 115 to 131 (LTGAFLFSLESQTTIGY). Positions 128-133 (TIGYGF) match the Selectivity filter motif. Topologically, residues 132–140 (GFRYISEEC) are extracellular. A helical transmembrane segment spans residues 141–166 (PLAIVLLIAQLVLTTILEIFITGTFL). The Cytoplasmic portion of the chain corresponds to 167–379 (AKIARPKKRA…SALSVRISNV (213 aa)). 1,2-dioctanoyl-sn-glycero-3-phospho-(1D-myo-inositol-4,5-bisphosphate) contacts are provided by Lys-168, Arg-171, and Lys-173. 210-217 (GCQVTGKL) is an ATP binding site.

It belongs to the inward rectifier-type potassium channel (TC 1.A.2.1) family. KCNJ10 subfamily. As to quaternary structure, homotetramer. In kidney cells, it forms heteromeric channels with Kir5.1/KCNJ16; this interaction is required for KCNJ16 localization to the basolateral membrane. Interacts with MAGI1, alone and possibly as a heteromer with KCNJ16; this interaction may facilitate KCNJ10/KCNJ16 potassium channel expression at the basolateral membrane in kidney cells. Interacts with PATJ. Widely expressed in adult brain, including in the neocortex, the stratum pyrimadale of the hippocampus and the piriform cortex. Expressed by cultured astrocytes and also by cocultured cortical neurons (at protein level). In the distal segment of the nephron, expressed in the distal convoluted tubule, the connecting tubule, and the early cortical collecting duct.

The protein resides in the membrane. Its subcellular location is the basolateral cell membrane. The catalysed reaction is K(+)(in) = K(+)(out). Channel activity is strongly regulated by variations of cytosolic pH; channels are activated by alkaline and inhibited by acidic pH values. Activated by phosphatidylinositol 4,5 biphosphate (PtdIns(4,5)P2). Inhibited by Ba(2+) and Cs(+). In terms of biological role, may be responsible for potassium buffering action of glial cells in the brain. Inward rectifier potassium channels are characterized by a greater tendency to allow potassium to flow into the cell rather than out of it. Their voltage dependence is regulated by the concentration of extracellular potassium; as external potassium is raised, the voltage range of the channel opening shifts to more positive voltages. The inward rectification is mainly due to the blockage of outward current by internal magnesium. Can be blocked by extracellular barium and cesium. In the kidney, together with KCNJ16, mediates basolateral K(+) recycling in distal tubules; this process is critical for Na(+) reabsorption at the tubules. In Mus musculus (Mouse), this protein is ATP-sensitive inward rectifier potassium channel 10.